The primary structure comprises 728 residues: Phosphoribosylformylglycinamidine synthase subunit PurL (728 aa).

The active site involves histidine 42. ATP is bound by residues tyrosine 45 and lysine 84. Position 86 (glutamate 86) interacts with Mg(2+). Substrate-binding positions include 87–90 (SHNH) and arginine 109. Histidine 88 (proton acceptor) is an active-site residue. Aspartate 110 lines the Mg(2+) pocket. Glutamine 237 contacts substrate. Mg(2+) is bound at residue aspartate 265. 309 to 311 (ESQ) provides a ligand contact to substrate. 2 residues coordinate ATP: aspartate 491 and glycine 528. A Mg(2+)-binding site is contributed by asparagine 529. Serine 531 contacts substrate.

It belongs to the FGAMS family. In terms of assembly, monomer. Part of the FGAM synthase complex composed of 1 PurL, 1 PurQ and 2 PurS subunits.

Its subcellular location is the cytoplasm. The enzyme catalyses N(2)-formyl-N(1)-(5-phospho-beta-D-ribosyl)glycinamide + L-glutamine + ATP + H2O = 2-formamido-N(1)-(5-O-phospho-beta-D-ribosyl)acetamidine + L-glutamate + ADP + phosphate + H(+). It participates in purine metabolism; IMP biosynthesis via de novo pathway; 5-amino-1-(5-phospho-D-ribosyl)imidazole from N(2)-formyl-N(1)-(5-phospho-D-ribosyl)glycinamide: step 1/2. Functionally, part of the phosphoribosylformylglycinamidine synthase complex involved in the purines biosynthetic pathway. Catalyzes the ATP-dependent conversion of formylglycinamide ribonucleotide (FGAR) and glutamine to yield formylglycinamidine ribonucleotide (FGAM) and glutamate. The FGAM synthase complex is composed of three subunits. PurQ produces an ammonia molecule by converting glutamine to glutamate. PurL transfers the ammonia molecule to FGAR to form FGAM in an ATP-dependent manner. PurS interacts with PurQ and PurL and is thought to assist in the transfer of the ammonia molecule from PurQ to PurL. The polypeptide is Phosphoribosylformylglycinamidine synthase subunit PurL (Campylobacter jejuni subsp. jejuni serotype O:23/36 (strain 81-176)).